A 746-amino-acid polypeptide reads, in one-letter code: NAD(P)H-quinone oxidoreductase subunit 5, chloroplastic (746 aa).

16 helical membrane-spanning segments follow: residues 9-29, 40-60, 88-108, 125-145, 147-167, 185-205, 225-245, 258-278, 283-303, 327-347, 354-374, 396-416, 425-445, 554-574, 610-630, and 726-746; these read YIILFLPLPVTMSIGFGLLFV, WAFVSVLLLSMVMGFSVNLAI, LIDPLTSIMSLLISTVGIMVL, FAYMSFFNTSMLGLVTSSNLI, IHIFWELVGMCSYLLIGFWFT, GDFGLLLGILGFYWITGSLEF, FAILCACLLFLGAVAKSAQFP, TPISALIHAATMVAAGIFLVA, LFIVIPYIMNLISLIGIITLL, LGYIMLALGIGSYRAALFHLI, ALLFLGSGSIIHSMEPVVGYS, TTFLLGTLSLCGIPPLACFWS, WLYSPIFAIIAYFTAGLTAFY, LFPLLVLVLFTLVVGLIGIPF, IFSVSVSLFGLFIASIFYGSV, and YLFLYLSYVSIFLIFYQYFDF.

Belongs to the complex I subunit 5 family. As to quaternary structure, NDH is composed of at least 16 different subunits, 5 of which are encoded in the nucleus.

The protein resides in the plastid. It localises to the chloroplast thylakoid membrane. It carries out the reaction a plastoquinone + NADH + (n+1) H(+)(in) = a plastoquinol + NAD(+) + n H(+)(out). The catalysed reaction is a plastoquinone + NADPH + (n+1) H(+)(in) = a plastoquinol + NADP(+) + n H(+)(out). Functionally, NDH shuttles electrons from NAD(P)H:plastoquinone, via FMN and iron-sulfur (Fe-S) centers, to quinones in the photosynthetic chain and possibly in a chloroplast respiratory chain. The immediate electron acceptor for the enzyme in this species is believed to be plastoquinone. Couples the redox reaction to proton translocation, and thus conserves the redox energy in a proton gradient. This chain is NAD(P)H-quinone oxidoreductase subunit 5, chloroplastic (ndhF), found in Dioscorea elephantipes (Elephant's foot yam).